The primary structure comprises 118 residues: uncharacterized protein (118 aa).

The N-terminal stretch at 1 to 22 is a signal peptide; sequence MKMSYLRSGIVGFLAGASLSYA. Residues 41–71 adopt a coiled-coil conformation; that stretch reads TATEALETDKQLYKKIEKKIEELESSCVKKS.

This is an uncharacterized protein from Schizosaccharomyces pombe (strain 972 / ATCC 24843) (Fission yeast).